The following is a 484-amino-acid chain: MHNLTIAEIIQGLKNKSFSSVEITQHFLNRIKTLDTEYNSFITLTEEQALAQATAADARLAAGDAPALCGVPLAHKDIFCTNGVRTSCGSKMLDNFVPPYDATVVTNYSQDGVVILGKTNMDEFAMGSSNETSYYGPVKNPWDTNCVPGGSSGGSAAAVAARLVPGATATDTGGSIRQPAALCGITGIKPTYGRVSRWGMIAFASSLDQAGTMTRTAEDAALMLQSMASYDRKDSTCVDHPIDDYSVNLNAPLAGLKIGIPKEYFGEGLNPGTAEAVQAAIKTYEAMGATVQEVSLPHTHLAVPAYYVIAPAECSANLSRFDGVRYGHRCDNPKDLEDLYRRSRGEGFGEEVKRRILVGTYALSAGFYDAYYRKAQQVRRLIKQDFVDVFSQVDVILGPTSPSPAFEFGSKGSDPVAMYLEDIYTIATNLAGLPGMSIPCGQVDGKPVGLQLIGNYFAEAKLLNIAHKFQTETDFHTQAPAAIK.

Residues K76 and S151 each act as charge relay system in the active site. S175 acts as the Acyl-ester intermediate in catalysis.

Belongs to the amidase family. GatA subfamily. As to quaternary structure, heterotrimer of A, B and C subunits.

The enzyme catalyses L-glutamyl-tRNA(Gln) + L-glutamine + ATP + H2O = L-glutaminyl-tRNA(Gln) + L-glutamate + ADP + phosphate + H(+). Functionally, allows the formation of correctly charged Gln-tRNA(Gln) through the transamidation of misacylated Glu-tRNA(Gln) in organisms which lack glutaminyl-tRNA synthetase. The reaction takes place in the presence of glutamine and ATP through an activated gamma-phospho-Glu-tRNA(Gln). This chain is Glutamyl-tRNA(Gln) amidotransferase subunit A, found in Saccharophagus degradans (strain 2-40 / ATCC 43961 / DSM 17024).